We begin with the raw amino-acid sequence, 91 residues long: ATP synthase subunit c (91 aa).

2 consecutive transmembrane segments (helical) span residues 4-24 (FTMCVLAAGIGMALGTLGTGI) and 53-73 (IGLAMIESLAIYALVVCLIIL).

It belongs to the ATPase C chain family. As to quaternary structure, F-type ATPases have 2 components, F(1) - the catalytic core - and F(0) - the membrane proton channel. F(1) has five subunits: alpha(3), beta(3), gamma(1), delta(1), epsilon(1). F(0) has three main subunits: a(1), b(2) and c(10-14). The alpha and beta chains form an alternating ring which encloses part of the gamma chain. F(1) is attached to F(0) by a central stalk formed by the gamma and epsilon chains, while a peripheral stalk is formed by the delta and b chains.

It localises to the cell inner membrane. In terms of biological role, f(1)F(0) ATP synthase produces ATP from ADP in the presence of a proton or sodium gradient. F-type ATPases consist of two structural domains, F(1) containing the extramembraneous catalytic core and F(0) containing the membrane proton channel, linked together by a central stalk and a peripheral stalk. During catalysis, ATP synthesis in the catalytic domain of F(1) is coupled via a rotary mechanism of the central stalk subunits to proton translocation. Key component of the F(0) channel; it plays a direct role in translocation across the membrane. A homomeric c-ring of between 10-14 subunits forms the central stalk rotor element with the F(1) delta and epsilon subunits. The chain is ATP synthase subunit c from Geotalea uraniireducens (strain Rf4) (Geobacter uraniireducens).